The sequence spans 377 residues: Homoserine O-acetyltransferase (377 aa).

The region spanning 48–347 (NVVLIEHALT…PVGHDAFLTE (300 aa)) is the AB hydrolase-1 domain. Residue Ser143 is the Nucleophile of the active site. A substrate-binding site is contributed by Arg213. Residues Asp311 and His341 contribute to the active site. Asp342 contacts substrate.

It belongs to the AB hydrolase superfamily. MetX family. As to quaternary structure, homodimer.

It localises to the cytoplasm. The catalysed reaction is L-homoserine + acetyl-CoA = O-acetyl-L-homoserine + CoA. The protein operates within amino-acid biosynthesis; L-methionine biosynthesis via de novo pathway; O-acetyl-L-homoserine from L-homoserine: step 1/1. Functionally, transfers an acetyl group from acetyl-CoA to L-homoserine, forming acetyl-L-homoserine. This is Homoserine O-acetyltransferase from Corynebacterium glutamicum (strain ATCC 13032 / DSM 20300 / JCM 1318 / BCRC 11384 / CCUG 27702 / LMG 3730 / NBRC 12168 / NCIMB 10025 / NRRL B-2784 / 534).